A 102-amino-acid polypeptide reads, in one-letter code: Small ribosomal subunit protein uS10 (102 aa).

This sequence belongs to the universal ribosomal protein uS10 family. As to quaternary structure, part of the 30S ribosomal subunit.

Involved in the binding of tRNA to the ribosomes. The polypeptide is Small ribosomal subunit protein uS10 (Arthrobacter sp. (strain FB24)).